Reading from the N-terminus, the 186-residue chain is Photosystem I assembly protein Ycf4 (186 aa).

Helical transmembrane passes span 22–42 (FCWA…GTSS) and 57–77 (IIFF…LFIS).

Belongs to the Ycf4 family.

The protein localises to the plastid. It localises to the chloroplast thylakoid membrane. Seems to be required for the assembly of the photosystem I complex. The chain is Photosystem I assembly protein Ycf4 from Vitis vinifera (Grape).